The primary structure comprises 74 residues: Exodeoxyribonuclease 7 small subunit (74 aa).

This sequence belongs to the XseB family. As to quaternary structure, heterooligomer composed of large and small subunits.

Its subcellular location is the cytoplasm. The enzyme catalyses Exonucleolytic cleavage in either 5'- to 3'- or 3'- to 5'-direction to yield nucleoside 5'-phosphates.. In terms of biological role, bidirectionally degrades single-stranded DNA into large acid-insoluble oligonucleotides, which are then degraded further into small acid-soluble oligonucleotides. In Neisseria gonorrhoeae (strain ATCC 700825 / FA 1090), this protein is Exodeoxyribonuclease 7 small subunit.